Consider the following 166-residue polypeptide: MSQRPNPSALIWLLLSALVIGLDQWSKAWVLSSLPEYTSVPVIDGFWNWYRTYNTGAAFSFLSDAGGWQLWFFTALAMGISGLLAFWLSRTARGHWRSALPYALVIGGAIGNVIDRLMHGHVVDFIQWYIGSHTWPSFNIADSAIVGGAIGIAVFGLFDKAGKQAS.

3 helical membrane-spanning segments follow: residues 10-30, 68-88, and 94-114; these read LIWL…KAWV, WQLW…AFWL, and GHWR…GNVI. Residues Asp124 and Asp142 contribute to the active site. A helical transmembrane segment spans residues 138–158; sequence FNIADSAIVGGAIGIAVFGLF.

This sequence belongs to the peptidase A8 family.

It localises to the cell inner membrane. The catalysed reaction is Release of signal peptides from bacterial membrane prolipoproteins. Hydrolyzes -Xaa-Yaa-Zaa-|-(S,diacylglyceryl)Cys-, in which Xaa is hydrophobic (preferably Leu), and Yaa (Ala or Ser) and Zaa (Gly or Ala) have small, neutral side chains.. Its pathway is protein modification; lipoprotein biosynthesis (signal peptide cleavage). In terms of biological role, this protein specifically catalyzes the removal of signal peptides from prolipoproteins. This chain is Lipoprotein signal peptidase, found in Xanthomonas oryzae pv. oryzae (strain MAFF 311018).